The primary structure comprises 218 residues: UPF0502 protein Mmwyl1_3509 (218 aa).

Belongs to the UPF0502 family.

In Marinomonas sp. (strain MWYL1), this protein is UPF0502 protein Mmwyl1_3509.